A 277-amino-acid chain; its full sequence is Sarcosine/dimethylglycine N-methyltransferase (277 aa).

Belongs to the methyltransferase superfamily. As to quaternary structure, monomer.

It catalyses the reaction sarcosine + 2 S-adenosyl-L-methionine = glycine betaine + 2 S-adenosyl-L-homocysteine + 2 H(+). The catalysed reaction is sarcosine + S-adenosyl-L-methionine = N,N-dimethylglycine + S-adenosyl-L-homocysteine + H(+). It carries out the reaction N,N-dimethylglycine + S-adenosyl-L-methionine = glycine betaine + S-adenosyl-L-homocysteine + H(+). The protein operates within amine and polyamine biosynthesis; betaine biosynthesis via glycine pathway; betaine from glycine: step 2/3. It participates in amine and polyamine biosynthesis; betaine biosynthesis via glycine pathway; betaine from glycine: step 3/3. Its activity is regulated as follows. Inhibited by n-butylic acid and S-adenosyl-L-homocysteine. In terms of biological role, catalyzes the methylation of sarcosine and dimethylglycine to dimethylglycine and betaine, respectively, with S-adenosylmethionine (AdoMet) acting as the methyl donor. Activity with sarcosine is much weaker than activity with dimethylglycine. This is Sarcosine/dimethylglycine N-methyltransferase from Aphanothece halophytica.